We begin with the raw amino-acid sequence, 459 residues long: Serine carboxypeptidase-like 27 (459 aa).

An N-terminal signal peptide occupies residues 1 to 20 (MDYSFLLIILLLTISTSCCA). 3 disulfide bridges follow: C91/C344, C252/C264, and C288/C312. The N-linked (GlcNAc...) asparagine glycan is linked to N142. The active site involves S184. Residues N289 and N333 are each glycosylated (N-linked (GlcNAc...) asparagine). Catalysis depends on residues D381 and H433.

It belongs to the peptidase S10 family. In terms of tissue distribution, ubiquitous.

Its subcellular location is the secreted. In terms of biological role, probable carboxypeptidase. The protein is Serine carboxypeptidase-like 27 (SCPL27) of Arabidopsis thaliana (Mouse-ear cress).